Here is a 907-residue protein sequence, read N- to C-terminus: Clumping factor B (907 aa).

The signal sequence occupies residues 1–44; the sequence is MKKRIDYLSNKQNKYSIRRFTVGTTSVIVGATILFGIGNHQAQA. Residues 15-26 carry the YSIRK-G/S signaling motif motif; sequence YSIRRFTVGTTS. Composition is skewed to polar residues over residues 44 to 61 and 68 to 101; these read ASEQ…NASA and MIET…KPMS. Residues 44-191 form a disordered region; the sequence is ASEQSNDTTQ…AQGTSKPSVR (148 aa). Residues 45–542 are ligand binding A region; that stretch reads SEQSNDTTQS…GSADGDSAVN (498 aa). Low complexity predominate over residues 102-119; that stretch reads TQTSNTTTTEPASTNETP. The segment covering 134–189 has biased composition (polar residues); it reads QDQTVPQEANSQVDNKTTNDANSIATNSELKNPQTLDLPQSSPQTISNAQGTSKPS. An MIDAS-like motif motif is present at residues 272-276; that stretch reads DYSNS. Positions 530–879 are disordered; it reads YGGGSADGDS…ETGDKSENTN (350 aa). Positions 545 to 555 are enriched in pro residues; that stretch reads DPTPGPPVDPE. Residues 556 to 831 show a composition bias toward acidic residues; it reads PSPDPEPEPS…SDSDSDSDSD (276 aa). Residues 835 to 846 show a composition bias toward polar residues; sequence RVTPPNNEQKAP. Basic and acidic residues predominate over residues 863–876; sequence HKTDALPETGDKSE. The LPXTG sorting signal motif lies at 868-872; it reads LPETG. Thr-871 carries the post-translational modification Pentaglycyl murein peptidoglycan amidated threonine. The propeptide at 872 to 907 is removed by sortase; it reads GDKSENTNATLFGAMMALLGSLLLFRKRKQDHKEKA.

It belongs to the serine-aspartate repeat-containing protein (SDr) family. Post-translationally, proteolytically cleaved by aureolysin (aur). This cleavage leads to the inactivation of ClfB.

It localises to the secreted. Its subcellular location is the cell wall. Functionally, cell surface-associated protein implicated in virulence by promoting bacterial attachment to both alpha- and beta-chains of human fibrinogen and inducing the formation of bacterial clumps. The chain is Clumping factor B (clfB) from Staphylococcus aureus (strain MW2).